The following is a 669-amino-acid chain: MTLLSNILDCGGCISAQRFTRLLRQSGSSGPSPSAPTAGTFESKSMLEPTSSHSLATGRVPLLHDFDASTTESPGTYVLDGVARVAQLALEPTVMDALPDSDTEQVLGNLNSSAPWNLTLASAAATNFENCSALFVNYTLPQTGLYCNWTWDTLLCWPPTPAGVLARMNCPGGFHGVDTRKFAIRKCELDGRWGSRPNATEVNPPGWTDYGPCYKPEIIRLMQQMGSKDFDAYIDIARRTRTLEIVGLCLSLFALIVSLLIFCTFRSLRNNRTKIHKNLFVAMVLQVIIRLTLYLDQFRRGNKEAATNTSLSVIENTPYLCEASYVLLEYARTAMFMWMFIEGLYLHNMVTVAVFQGSFPLKFFSRLGWCVPILMTTVWARCTVMYMDTSLGECLWNYNLTPYYWILEGPRLAVILLNFCFLVNIIRVLVMKLRQSQASDIEQTRKAVRAAIVLLPLLGITNLLHQLAPLKTATNFAVWSYGTHFLTSFQGFFIALIYCFLNGEVRAVLLKSLATQLSVRGHPEWAPKRASMYSGAYNTAPDTDAVQPAGDPSATGKRISPPNKRLNGRKPSSASIVMIHEPQQRQRLMPRLQNKAREKGKDRVEKTDAEAEPDPTISHIHSKEAGSARSRTRGSKWIMGICFRGQKVLRVPSASSVPPESVVFELSEQ.

Residues 1–244 (MTLLSNILDC…DIARRTRTLE (244 aa)) lie on the Extracellular side of the membrane. The tract at residues 24-52 (RQSGSSGPSPSAPTAGTFESKSMLEPTSS) is disordered. The segment covering 26–40 (SGSSGPSPSAPTAGT) has biased composition (low complexity). Asn-111, Asn-117, Asn-130, Asn-137, Asn-148, and Asn-198 each carry an N-linked (GlcNAc...) asparagine glycan. A helical membrane pass occupies residues 245–265 (IVGLCLSLFALIVSLLIFCTF). Residues 266–274 (RSLRNNRTK) lie on the Cytoplasmic side of the membrane. Residues 275-295 (IHKNLFVAMVLQVIIRLTLYL) form a helical membrane-spanning segment. At 296–334 (DQFRRGNKEAATNTSLSVIENTPYLCEASYVLLEYARTA) the chain is on the extracellular side. A glycan (N-linked (GlcNAc...) asparagine) is linked at Asn-308. The helical transmembrane segment at 335-355 (MFMWMFIEGLYLHNMVTVAVF) threads the bilayer. Topologically, residues 356–366 (QGSFPLKFFSR) are cytoplasmic. A helical membrane pass occupies residues 367 to 387 (LGWCVPILMTTVWARCTVMYM). At 388-411 (DTSLGECLWNYNLTPYYWILEGPR) the chain is on the extracellular side. The chain crosses the membrane as a helical span at residues 412 to 432 (LAVILLNFCFLVNIIRVLVMK). Residues 433-449 (LRQSQASDIEQTRKAVR) are Cytoplasmic-facing. A helical transmembrane segment spans residues 450–470 (AAIVLLPLLGITNLLHQLAPL). Topologically, residues 471 to 480 (KTATNFAVWS) are extracellular. A helical transmembrane segment spans residues 481–501 (YGTHFLTSFQGFFIALIYCFL). Topologically, residues 502-669 (NGEVRAVLLK…ESVVFELSEQ (168 aa)) are cytoplasmic. 2 disordered regions span residues 536–573 (AYNT…KPSS) and 590–614 (PRLQ…AEPD). Over residues 595–609 (KAREKGKDRVEKTDA) the composition is skewed to basic and acidic residues.

The protein belongs to the G-protein coupled receptor 2 family. Mainly present in clock neurons of the brain. Localizes in all 4 s-LNv neurons, 1 LNd neuron, 7 DN1 neurons, and 1 DN3 neuron. In addition to the clock neurons, it is also present in approximately 13 pairs of neurons along the ventral nerve cord in third instar larvae, which do not overlap with dopaminergic or serotonergic neurons. Not present in DN2 neurons (at protein level).

It localises to the cell membrane. In terms of biological role, receptor for PDF, a neuropeptide controlling circadian behavioral rhythms. Probably regulates circadian behavioral rhythms through coordination of activities of clock neurons. PDF-binding results in the elevation of cAMP synthesis. Plays a role in sleep regulation and regulates the state transition from sleep to wake. The protein is PDF receptor of Drosophila melanogaster (Fruit fly).